Here is a 381-residue protein sequence, read N- to C-terminus: Outer membrane protein assembly factor BamB (381 aa).

The first 22 residues, 1–22, serve as a signal peptide directing secretion; that stretch reads MNLLKRYAAPVACAAAVLVFAA. A lipid anchor (N-palmitoyl cysteine) is attached at Cys23. Cys23 carries the S-diacylglycerol cysteine lipid modification.

It belongs to the BamB family. Part of the Bam complex.

It is found in the cell outer membrane. Functionally, part of the outer membrane protein assembly complex, which is involved in assembly and insertion of beta-barrel proteins into the outer membrane. The chain is Outer membrane protein assembly factor BamB from Burkholderia pseudomallei (strain K96243).